A 654-amino-acid polypeptide reads, in one-letter code: Potassium voltage-gated channel subfamily A member 4 (654 aa).

At 1–305 (MEVAMVSAES…LLFEYPESSS (305 aa)) the chain is on the cytoplasmic side. The disordered stretch occupies residues 24–145 (QARARERERL…EEGRFYYSEE (122 aa)). Low complexity predominate over residues 36–50 (SRAAAAAAVAAATAA). Positions 81-99 (GSRRRRRQRTEKKKLHHRQ) are enriched in basic residues. Ser-122 is subject to Phosphoserine. Over residues 122 to 137 (SEEEEDEEEEEEEEEE) the composition is skewed to acidic residues. A helical membrane pass occupies residues 306–327 (PARGIAIVSVLVILISIVIFCL). The Extracellular segment spans residues 328–371 (ETLPEFRDDRDLIMALSAGGHSRLLNDTSAPHLENSGHTIFNDP). The N-linked (GlcNAc...) asparagine glycan is linked to Asn-353. A helical transmembrane segment spans residues 372–393 (FFIVETVCIVWFSFEFVVRCFA). The Cytoplasmic segment spans residues 394 to 404 (CPSQALFFKNI). The helical transmembrane segment at 405-425 (MNIIDIVSILPYFITLGTDLA) threads the bilayer. The Extracellular segment spans residues 426–440 (QQQGGGNGQQQQAMS). The chain crosses the membrane as a helical; Voltage-sensor span at residues 441–461 (FAILRIIRLVRVFRIFKLSRH). Topologically, residues 462 to 476 (SKGLQILGHTLRASM) are cytoplasmic. Residues 463–476 (KGLQILGHTLRASM) form an S4-S5 linker region. The chain crosses the membrane as a helical span at residues 477 to 498 (RELGLLIFFLFIGVILFSSAVY). Residues 499–512 (FAEADEPTTHFQSI) are Extracellular-facing. Residues 513 to 524 (PDAFWWAVVTMT) constitute an intramembrane region (helical). The short motif at 525 to 530 (TVGYGD) is the Selectivity filter element. The stretch at 525 to 532 (TVGYGDMK) is an intramembrane region. Over 533–539 (PITVGGK) the chain is Extracellular. Residues 540–568 (IVGSLCAIAGVLTIALPVPVIVSNFNYFY) form a helical membrane-spanning segment. Topologically, residues 569-654 (HRETENEEQT…SNAKAVETDV (86 aa)) are cytoplasmic. Ser-600 is modified (phosphoserine; by PKA). The segment covering 630 to 641 (CQGKGDESETDK) has biased composition (basic and acidic residues). The tract at residues 630–654 (CQGKGDESETDKNNCSNAKAVETDV) is disordered. Positions 652–654 (TDV) match the PDZ-binding motif.

It belongs to the potassium channel family. A (Shaker) (TC 1.A.1.2) subfamily. Kv1.4/KCNA4 sub-subfamily. In terms of assembly, homotetramer and heterotetramer of potassium channel proteins. Interacts with KCNAB1 and KCNAB2. Interacts with DLG1, DLG2 and DLG4 via their PDZ domains. Interacts with SIGMAR1. Detected in a complex with KCNA1. Interacts with KCNA2. Part of a complex containing KCNA1, KCNAB1 and LGI1. Interacts (via cytoplasmic N-terminal domain) with KCNRG. As to expression, expressed in the brain, lens and retina.

The protein resides in the cell membrane. Its subcellular location is the cell projection. The protein localises to the axon. It carries out the reaction K(+)(in) = K(+)(out). Functionally, voltage-gated potassium channel that mediates transmembrane potassium transport in excitable membranes. Forms tetrameric potassium-selective channels through which potassium ions pass in accordance with their electrochemical gradient. The channel alternates between opened and closed conformations in response to the voltage difference across the membrane. Can form functional homotetrameric channels and heterotetrameric channels that contain variable proportions of KCNA1, KCNA2, KCNA4, KCNA5, and possibly other family members as well; channel properties depend on the type of alpha subunits that are part of the channel. Channel properties are modulated by cytoplasmic beta subunits that regulate the subcellular location of the alpha subunits and promote rapid inactivation. In vivo, membranes probably contain a mixture of heteromeric potassium channel complexes, making it difficult to assign currents observed in intact tissues to any particular potassium channel family member. Homotetrameric KCNA4 forms a potassium channel that opens in response to membrane depolarization, followed by rapid spontaneous channel closure. Likewise, a heterotetrameric channel formed by KCNA1 and KCNA4 shows rapid inactivation. The protein is Potassium voltage-gated channel subfamily A member 4 (Kcna4) of Mus musculus (Mouse).